The sequence spans 348 residues: Probable dual-specificity RNA methyltransferase RlmN (348 aa).

Residue E89 is the Proton acceptor of the active site. Residues H95–R328 form the Radical SAM core domain. C102 and C333 are disulfide-bonded. 3 residues coordinate [4Fe-4S] cluster: C109, C113, and C116. Residues G159–E160, S191, S214–H216, and N290 each bind S-adenosyl-L-methionine. The S-methylcysteine intermediate role is filled by C333.

It belongs to the radical SAM superfamily. RlmN family. [4Fe-4S] cluster serves as cofactor.

It localises to the cytoplasm. It carries out the reaction adenosine(2503) in 23S rRNA + 2 reduced [2Fe-2S]-[ferredoxin] + 2 S-adenosyl-L-methionine = 2-methyladenosine(2503) in 23S rRNA + 5'-deoxyadenosine + L-methionine + 2 oxidized [2Fe-2S]-[ferredoxin] + S-adenosyl-L-homocysteine. It catalyses the reaction adenosine(37) in tRNA + 2 reduced [2Fe-2S]-[ferredoxin] + 2 S-adenosyl-L-methionine = 2-methyladenosine(37) in tRNA + 5'-deoxyadenosine + L-methionine + 2 oxidized [2Fe-2S]-[ferredoxin] + S-adenosyl-L-homocysteine. Its function is as follows. Specifically methylates position 2 of adenine 2503 in 23S rRNA and position 2 of adenine 37 in tRNAs. This is Probable dual-specificity RNA methyltransferase RlmN from Dictyoglomus thermophilum (strain ATCC 35947 / DSM 3960 / H-6-12).